The primary structure comprises 640 residues: Protein ALTERED PHOSPHATE STARVATION RESPONSE 1 (640 aa).

The tract at residues 60–175 (TPLHLHHNPP…ATPQASSVVS (116 aa)) is disordered. Positions 68–87 (PPSPSPPPPPPPRPPPPPLS) are enriched in pro residues. Over residues 88 to 103 (PGSETTTWTTTTTSSV) the composition is skewed to low complexity. Residues 104–118 (LPPPPPPPPPPPPPS) are compositionally biased toward pro residues. A compositionally biased stretch (low complexity) spans 144–173 (TTATRTATGTGSDAAVTTAPTTATPQASSV). The stretch at 336–371 (KTEKAKKDVEKLESQLSVSSQAIQSASNEIIKLRET) forms a coiled coil.

As to expression, expressed in the root tip of primary and lateral roots, specifically in the meristematic region, including the quiescent center and lateral root cap cells.

The protein localises to the nucleus. In terms of biological role, required for the coordination of cell differentiation and cell elongation in the root tip. Required for the coordination of cell processes necessary for correct root growth in response to phosphate starvation, through the modulation of the auxin transporter protein PIN7. The protein is Protein ALTERED PHOSPHATE STARVATION RESPONSE 1 of Arabidopsis thaliana (Mouse-ear cress).